The sequence spans 361 residues: Protein RecA (361 aa).

77–84 (GPESSGKT) serves as a coordination point for ATP.

It belongs to the RecA family.

It is found in the cytoplasm. In terms of biological role, can catalyze the hydrolysis of ATP in the presence of single-stranded DNA, the ATP-dependent uptake of single-stranded DNA by duplex DNA, and the ATP-dependent hybridization of homologous single-stranded DNAs. It interacts with LexA causing its activation and leading to its autocatalytic cleavage. This Brucella suis (strain ATCC 23445 / NCTC 10510) protein is Protein RecA.